The following is an 89-amino-acid chain: Small ribosomal subunit protein uS15 (89 aa).

Belongs to the universal ribosomal protein uS15 family. Part of the 30S ribosomal subunit. Forms a bridge to the 50S subunit in the 70S ribosome, contacting the 23S rRNA.

In terms of biological role, one of the primary rRNA binding proteins, it binds directly to 16S rRNA where it helps nucleate assembly of the platform of the 30S subunit by binding and bridging several RNA helices of the 16S rRNA. Its function is as follows. Forms an intersubunit bridge (bridge B4) with the 23S rRNA of the 50S subunit in the ribosome. This chain is Small ribosomal subunit protein uS15, found in Azoarcus sp. (strain BH72).